The sequence spans 255 residues: Pyrroloquinoline-quinone synthase (255 aa).

Belongs to the PqqC family.

It catalyses the reaction 6-(2-amino-2-carboxyethyl)-7,8-dioxo-1,2,3,4,7,8-hexahydroquinoline-2,4-dicarboxylate + 3 O2 = pyrroloquinoline quinone + 2 H2O2 + 2 H2O + H(+). Its pathway is cofactor biosynthesis; pyrroloquinoline quinone biosynthesis. Its function is as follows. Ring cyclization and eight-electron oxidation of 3a-(2-amino-2-carboxyethyl)-4,5-dioxo-4,5,6,7,8,9-hexahydroquinoline-7,9-dicarboxylic-acid to PQQ. The protein is Pyrroloquinoline-quinone synthase of Cereibacter sphaeroides (strain KD131 / KCTC 12085) (Rhodobacter sphaeroides).